A 336-amino-acid polypeptide reads, in one-letter code: tRNA N6-adenosine threonylcarbamoyltransferase (336 aa).

Fe cation is bound by residues His112 and His116. Substrate is bound by residues 136–140, Asp169, Gly182, and Asn276; that span reads LVSGG. Asp304 serves as a coordination point for Fe cation.

Belongs to the KAE1 / TsaD family. It depends on Fe(2+) as a cofactor.

It is found in the cytoplasm. The catalysed reaction is L-threonylcarbamoyladenylate + adenosine(37) in tRNA = N(6)-L-threonylcarbamoyladenosine(37) in tRNA + AMP + H(+). Its function is as follows. Required for the formation of a threonylcarbamoyl group on adenosine at position 37 (t(6)A37) in tRNAs that read codons beginning with adenine. Is involved in the transfer of the threonylcarbamoyl moiety of threonylcarbamoyl-AMP (TC-AMP) to the N6 group of A37, together with TsaE and TsaB. TsaD likely plays a direct catalytic role in this reaction. This is tRNA N6-adenosine threonylcarbamoyltransferase from Francisella tularensis subsp. novicida (strain U112).